The chain runs to 80 residues: D-alanyl carrier protein (80 aa).

The Carrier domain occupies 1 to 77; the sequence is MDIQKQIVDI…KLVEQVKKLQ (77 aa). Serine 35 carries the post-translational modification O-(pantetheine 4'-phosphoryl)serine.

This sequence belongs to the DltC family. In terms of processing, 4'-phosphopantetheine is transferred from CoA to a specific serine of apo-DCP.

The protein resides in the cytoplasm. Its pathway is cell wall biogenesis; lipoteichoic acid biosynthesis. Its function is as follows. Carrier protein involved in the D-alanylation of lipoteichoic acid (LTA). The loading of thioester-linked D-alanine onto DltC is catalyzed by D-alanine--D-alanyl carrier protein ligase DltA. The DltC-carried D-alanyl group is further transferred to cell membrane phosphatidylglycerol (PG) by forming an ester bond, probably catalyzed by DltD. D-alanylation of LTA plays an important role in modulating the properties of the cell wall in Gram-positive bacteria, influencing the net charge of the cell wall. The protein is D-alanyl carrier protein of Lactobacillus delbrueckii subsp. bulgaricus (strain ATCC 11842 / DSM 20081 / BCRC 10696 / JCM 1002 / NBRC 13953 / NCIMB 11778 / NCTC 12712 / WDCM 00102 / Lb 14).